Reading from the N-terminus, the 90-residue chain is DNA-directed RNA polymerase subunit Rpo11 (90 aa).

The protein belongs to the archaeal Rpo11/eukaryotic RPB11/RPC19 RNA polymerase subunit family. As to quaternary structure, part of the 13-subunit RNA polymerase complex.

The protein localises to the cytoplasm. It carries out the reaction RNA(n) + a ribonucleoside 5'-triphosphate = RNA(n+1) + diphosphate. Its function is as follows. DNA-dependent RNA polymerase (RNAP) catalyzes the transcription of DNA into RNA using the four ribonucleoside triphosphates as substrates. The protein is DNA-directed RNA polymerase subunit Rpo11 of Sulfolobus acidocaldarius (strain ATCC 33909 / DSM 639 / JCM 8929 / NBRC 15157 / NCIMB 11770).